A 195-amino-acid chain; its full sequence is Kiwa protein KwaA (195 aa).

Helical transmembrane passes span 10–30, 46–66, and 117–137; these read GLYI…TAKI, LVLT…SIYF, and IAYL…DKYY.

It localises to the cell inner membrane. Its function is as follows. Component of antiviral defense system Kiwa, composed of KwaA and KwaB. Expression of Kiwa in E.coli (strain MG1655) confers resistance to phages lambda and SECphi18. In Escherichia coli O55:H7 (strain RM12579 / EPEC), this protein is Kiwa protein KwaA.